Reading from the N-terminus, the 869-residue chain is Aconitate hydratase B (869 aa).

Residues Arg191, 244-246, 417-419, and Ser501 each bind substrate; these read SSR and QDT. [4Fe-4S] cluster contacts are provided by Cys713, Cys772, and Cys775. Residues Arg794 and Arg799 each coordinate substrate.

The protein belongs to the aconitase/IPM isomerase family. As to quaternary structure, monomer. The cofactor is [4Fe-4S] cluster.

The enzyme catalyses citrate = D-threo-isocitrate. It carries out the reaction (2S,3R)-3-hydroxybutane-1,2,3-tricarboxylate = 2-methyl-cis-aconitate + H2O. It participates in carbohydrate metabolism; tricarboxylic acid cycle; isocitrate from oxaloacetate: step 2/2. Its pathway is organic acid metabolism; propanoate degradation. Functionally, involved in the catabolism of short chain fatty acids (SCFA) via the tricarboxylic acid (TCA)(acetyl degradation route) and probably via the 2-methylcitrate cycle I (propionate degradation route). Catalyzes the reversible isomerization of citrate to isocitrate via cis-aconitate. Catalyzes the hydration of 2-methyl-cis-aconitate to yield (2R,3S)-2-methylisocitrate. The apo form of AcnB functions as a RNA-binding regulatory protein. The chain is Aconitate hydratase B (acnB) from Pseudomonas aeruginosa (strain ATCC 15692 / DSM 22644 / CIP 104116 / JCM 14847 / LMG 12228 / 1C / PRS 101 / PAO1).